The chain runs to 450 residues: Tubulin alpha-3E chain (450 aa).

Residues 1 to 4 carry the MREC motif motif; sequence MREC. Gln11 contributes to the GTP binding site. The residue at position 40 (Lys40) is an N6-acetyllysine. GTP is bound by residues Glu71, Ser140, Gly144, Thr145, Thr179, Asn206, and Asn228. Glu71 is a Mg(2+) binding site. The active site involves Glu254. A 3'-nitrotyrosine modification is found at Tyr282. The residue at position 439 (Ser439) is a Phosphoserine. At Tyr450 the chain carries 3'-nitrotyrosine.

The protein belongs to the tubulin family. As to quaternary structure, dimer of alpha and beta chains. A typical microtubule is a hollow water-filled tube with an outer diameter of 25 nm and an inner diameter of 15 nM. Alpha-beta heterodimers associate head-to-tail to form protofilaments running lengthwise along the microtubule wall with the beta-tubulin subunit facing the microtubule plus end conferring a structural polarity. Microtubules usually have 13 protofilaments but different protofilament numbers can be found in some organisms and specialized cells. The cofactor is Mg(2+). Some glutamate residues at the C-terminus are polyglutamylated, resulting in polyglutamate chains on the gamma-carboxyl group. Polyglutamylation plays a key role in microtubule severing by spastin (SPAST). SPAST preferentially recognizes and acts on microtubules decorated with short polyglutamate tails: severing activity by SPAST increases as the number of glutamates per tubulin rises from one to eight, but decreases beyond this glutamylation threshold. Glutamylation is also involved in cilia motility. In terms of processing, some glutamate residues at the C-terminus are monoglycylated but not polyglycylated due to the absence of functional TTLL10 in human. Monoglycylation is mainly limited to tubulin incorporated into cilia and flagella axonemes, which is required for their stability and maintenance. Flagella glycylation controls sperm motility. Both polyglutamylation and monoglycylation can coexist on the same protein on adjacent residues, and lowering glycylation levels increases polyglutamylation, and reciprocally. Post-translationally, acetylation of alpha chains at Lys-40 is located inside the microtubule lumen. This modification has been correlated with increased microtubule stability, intracellular transport and ciliary assembly. Methylation of alpha chains at Lys-40 is found in mitotic microtubules and is required for normal mitosis and cytokinesis contributing to genomic stability. In terms of processing, nitration of Tyr-450 is irreversible and interferes with normal dynein intracellular distribution. Post-translationally, undergoes a tyrosination/detyrosination cycle, the cyclic removal and re-addition of a C-terminal tyrosine residue by the enzymes tubulin tyrosine carboxypeptidase (MATCAP1/KIAA0895L, VASH1 or VASH2) and tubulin tyrosine ligase (TTL), respectively. Tyrosination promotes microtubule interaction with CAP-Gly domain-containing proteins such as CLIP1, CLIP2 and DCTN1. Tyrosination regulates the initiation of dynein-dynactin motility via interaction with DCTN1, which brings the dynein-dynactin complex into contact with microtubules. In neurons, tyrosinated tubulins mediate the initiation of retrograde vesicle transport. In terms of processing, detyrosination is involved in metaphase plate congression by guiding chromosomes during mitosis: detyrosination promotes interaction with CENPE, promoting pole-proximal transport of chromosomes toward the equator. Detyrosination increases microtubules-dependent mechanotransduction in dystrophic cardiac and skeletal muscle. In cardiomyocytes, detyrosinated microtubules are required to resist to contractile compression during contraction: detyrosination promotes association with desmin (DES) at force-generating sarcomeres, leading to buckled microtubules and mechanical resistance to contraction.

The protein localises to the cytoplasm. It is found in the cytoskeleton. The enzyme catalyses GTP + H2O = GDP + phosphate + H(+). In terms of biological role, tubulin is the major constituent of microtubules, a cylinder consisting of laterally associated linear protofilaments composed of alpha- and beta-tubulin heterodimers. Microtubules grow by the addition of GTP-tubulin dimers to the microtubule end, where a stabilizing cap forms. Below the cap, tubulin dimers are in GDP-bound state, owing to GTPase activity of alpha-tubulin. In Homo sapiens (Human), this protein is Tubulin alpha-3E chain (TUBA3E).